Here is a 484-residue protein sequence, read N- to C-terminus: Pyruvate kinase (484 aa).

Arginine 33 contributes to the substrate binding site. Residues asparagine 35, serine 37, aspartate 67, and threonine 68 each coordinate K(+). Residue 35-38 (NFSH) participates in ATP binding. Residues arginine 74 and lysine 155 each contribute to the ATP site. Glutamate 221 serves as a coordination point for Mg(2+). Substrate contacts are provided by glycine 244, aspartate 245, and threonine 277. Residue aspartate 245 participates in Mg(2+) binding.

The protein belongs to the pyruvate kinase family. As to quaternary structure, homotetramer. It depends on Mg(2+) as a cofactor. Requires K(+) as cofactor.

The catalysed reaction is pyruvate + ATP = phosphoenolpyruvate + ADP + H(+). The protein operates within carbohydrate degradation; glycolysis; pyruvate from D-glyceraldehyde 3-phosphate: step 5/5. This is Pyruvate kinase (pyk) from Chlamydia pneumoniae (Chlamydophila pneumoniae).